We begin with the raw amino-acid sequence, 218 residues long: Small ribosomal subunit protein uS3c (218 aa).

The 72-residue stretch at 47 to 118 folds into the KH type-2 domain; sequence VQKNMRTSSG…KLNIAVTRIA (72 aa).

It belongs to the universal ribosomal protein uS3 family. In terms of assembly, part of the 30S ribosomal subunit.

It localises to the plastid. It is found in the chloroplast. The chain is Small ribosomal subunit protein uS3c (rps3) from Atropa belladonna (Belladonna).